The following is a 312-amino-acid chain: Dipeptide transport ATP-binding protein DppF (312 aa).

Residues Ile10–Leu255 form the ABC transporter domain. Gly45–Thr52 lines the ATP pocket.

The protein belongs to the ABC transporter superfamily. In terms of assembly, the complex is composed of two ATP-binding proteins (DppD and DppF), two transmembrane proteins (DppB and DppC) and a solute-binding protein (DppA).

The protein resides in the cell membrane. It catalyses the reaction a dipeptide(out) + ATP + H2O = a dipeptide(in) + ADP + phosphate + H(+). Part of the ABC transporter DppABCDF involved in dipeptide transport. Responsible for energy coupling to the transport system. This chain is Dipeptide transport ATP-binding protein DppF, found in Lactococcus lactis subsp. cremoris (strain MG1363).